Reading from the N-terminus, the 358-residue chain is 3-dehydroquinate synthase (358 aa).

Residues 70 to 75, 104 to 108, 128 to 129, lysine 141, lysine 150, and 168 to 171 contribute to the NAD(+) site; these read DGEQFK, GVIGD, TT, and CLHT. Zn(2+) is bound by residues glutamate 183, histidine 246, and histidine 263.

Belongs to the sugar phosphate cyclases superfamily. Dehydroquinate synthase family. It depends on Co(2+) as a cofactor. Zn(2+) is required as a cofactor. Requires NAD(+) as cofactor.

The protein localises to the cytoplasm. It carries out the reaction 7-phospho-2-dehydro-3-deoxy-D-arabino-heptonate = 3-dehydroquinate + phosphate. Its pathway is metabolic intermediate biosynthesis; chorismate biosynthesis; chorismate from D-erythrose 4-phosphate and phosphoenolpyruvate: step 2/7. Catalyzes the conversion of 3-deoxy-D-arabino-heptulosonate 7-phosphate (DAHP) to dehydroquinate (DHQ). The chain is 3-dehydroquinate synthase from Shewanella baltica (strain OS195).